The sequence spans 498 residues: Putative BTB/POZ domain-containing protein L788 (498 aa).

The BTB domain maps to 28–99; that stretch reads TDIILVLEDD…FYGQKIKSGN (72 aa).

This sequence belongs to the mimivirus BTB/WD family.

The polypeptide is Putative BTB/POZ domain-containing protein L788 (Acanthamoeba polyphaga (Amoeba)).